A 505-amino-acid polypeptide reads, in one-letter code: Proton-coupled zinc antiporter SLC30A1 (505 aa).

Residues 1–10 (MGCWGRNRGR) are Cytoplasmic-facing. A helical transmembrane segment spans residues 11–31 (LLCMLALTFMFMVLEVVVSRV). The Extracellular portion of the chain corresponds to 32–35 (TSSL). Residues 36-56 (AMLSDSFHMLSDVLALVVALV) form a helical membrane-spanning segment. Zn(2+)-binding residues include His43 and Asp47. Topologically, residues 57 to 80 (AERFARRTHATQKNTFGWIRAEVM) are cytoplasmic. Residues 81–101 (GALVNAIFLTGLCFAILLEAI) traverse the membrane as a helical segment. Over 102–113 (ERFVEPHEMQQP) the chain is Extracellular. A helical transmembrane segment spans residues 114–134 (LVVLGVGVAGLLVNVLGLCLF). The Cytoplasmic portion of the chain corresponds to 135-246 (HHHSGFSQDS…RAGQLNMRGV (112 aa)). The interval 142–215 (QDSGHSHSHG…DPEKPRSGDT (74 aa)) is disordered. Polar residues predominate over residues 187-199 (TNTLVANTSNSNG). The span at 203 to 214 (DPADPEKPRSGD) shows a compositional bias: basic and acidic residues. Residues 247 to 267 (FLHVLGDALGSVIVVVNALVF) form a helical membrane-spanning segment. Zn(2+) is bound by residues His249 and Asp253. The Extracellular portion of the chain corresponds to 268–306 (YFSWKGCSEGDFCVNPCFPDPCKAFVEIINSTHASVYEA). N-linked (GlcNAc...) asparagine glycosylation occurs at Asn297. Residues 307–327 (GPCWVLYLDPTLCVVMVCILL) traverse the membrane as a helical segment. At 328–505 (YTTYPLLKES…MPNKQPESSL (178 aa)) the chain is on the cytoplasmic side. At Ser504 the chain carries Phosphoserine.

Belongs to the cation diffusion facilitator (CDF) transporter (TC 2.A.4) family. SLC30A subfamily. Homodimer. Interacts with TMEM163. Interacts and forms a complex with TMC6 and TMC8; the interaction regulates zinc transport into the ER.

The protein localises to the cell membrane. It is found in the basolateral cell membrane. It localises to the cytoplasmic vesicle membrane. The protein resides in the cytoplasm. Its subcellular location is the endoplasmic reticulum membrane. The protein localises to the golgi apparatus membrane. It is found in the nucleus membrane. It carries out the reaction Zn(2+)(in) + 2 H(+)(out) = Zn(2+)(out) + 2 H(+)(in). Functionally, zinc ion:proton antiporter that could function at the plasma membrane mediating zinc efflux from cells against its electrochemical gradient protecting them from intracellular zinc accumulation and toxicity. Alternatively, could prevent the transport to the plasma membrane of CACNB2, the L-type calcium channels regulatory subunit, through a yet to be defined mechanism. By modulating the expression of these channels at the plasma membrane, could prevent calcium and zinc influx into cells. By the same mechanism, could also prevent L-type calcium channels-mediated heavy metal influx into cells. In some cells, could also function as a zinc ion:proton antiporter mediating zinc entry into the lumen of cytoplasmic vesicles. In macrophages, can increase zinc ions concentration into the lumen of cytoplasmic vesicles containing engulfed bacteria and could help inactivate them. Forms a complex with TMC6/EVER1 and TMC8/EVER2 at the ER membrane of keratynocytes which facilitates zinc uptake into the ER. Down-regulates the activity of transcription factors induced by zinc and cytokines. The chain is Proton-coupled zinc antiporter SLC30A1 from Macaca fascicularis (Crab-eating macaque).